Consider the following 502-residue polypeptide: MIVNKKYFLLICIIILISINCLVLAKDEIENFLKEGDDLVSKGKYDLANENYSNAIDLIGSDTQHPQYVSLLFKRAGIYHQKGKNILALSDLNRAIEANPDNIHARLKRAKIQSSLGRFEEAMDEYKRVLKIRPDNSQAKQQIEKLKKVEQQLEKVRDMVKVEKNYKDSIAILLDIQSVVSDLKEVRLMLCECFFQQGDHRKVLDETMTILKSEPSSVAALYWRGKTFFSMGEKEIAMKFLKEGLKFDPDNTNCRAMIKTINKFEKSTANAQELFNQQKYQDALGQIEDALEIEPNSPTHSTPLYLLKCKCLLKVKKGKESIEACNRALELDELNADALYNRAEAYMYEEDYQKALNDYNKAREHKPNDPQIHDGIRRAQKAQQMAKRKDYYKILGIQKSATPEEIKKAFKKLAIKNHPDKSTETDKEKAQQIYMDINEAYEALKDEEKRKRYDMGEDINDPHGGQGGQGGGFGGFGGFHGFQGFQGFQQGGGGGGFQFHFR.

Residues 1 to 25 (MIVNKKYFLLICIIILISINCLVLA) form the signal peptide. 8 TPR repeats span residues 29–62 (IENFLKEGDDLVSKGKYDLANENYSNAIDLIGSD), 69–102 (VSLLFKRAGIYHQKGKNILALSDLNRAIEANPDN), 103–136 (IHARLKRAKIQSSLGRFEEAMDEYKRVLKIRPDN), 184–217 (KEVRLMLCECFFQQGDHRKVLDETMTILKSEPSS), 218–251 (VAALYWRGKTFFSMGEKEIAMKFLKEGLKFDPDN), 264–297 (FEKSTANAQELFNQQKYQDALGQIEDALEIEPNS), 302–335 (TPLYLLKCKCLLKVKKGKESIEACNRALELDELN), and 336–369 (ADALYNRAEAYMYEEDYQKALNDYNKAREHKPND). Asn-51 carries an N-linked (GlcNAc...) asparagine glycan. A disulfide bond links Cys-309 and Cys-325. The 68-residue stretch at 390–457 (DYYKILGIQK…EKRKRYDMGE (68 aa)) folds into the J domain.

Its subcellular location is the secreted. The protein resides in the endoplasmic reticulum lumen. May be involved in the unfolded protein response (UPR) during ER stress. The protein is DnaJ homolog subfamily C member 3 homolog (dnajc3) of Dictyostelium discoideum (Social amoeba).